The sequence spans 318 residues: Methenyltetrahydromethanopterin cyclohydrolase (318 aa).

This sequence belongs to the MCH family.

The protein localises to the cytoplasm. It catalyses the reaction 5,10-methenyl-5,6,7,8-tetrahydromethanopterin + H2O = N(5)-formyl-5,6,7,8-tetrahydromethanopterin + H(+). The protein operates within one-carbon metabolism; methanogenesis from CO(2); 5,10-methenyl-5,6,7,8-tetrahydromethanopterin from CO(2): step 3/3. Its function is as follows. Catalyzes the reversible interconversion of 5-formyl-H(4)MPT to methenyl-H(4)MPT(+). The protein is Methenyltetrahydromethanopterin cyclohydrolase of Methanocella arvoryzae (strain DSM 22066 / NBRC 105507 / MRE50).